A 206-amino-acid chain; its full sequence is Putative 3-methyladenine DNA glycosylase (206 aa).

It belongs to the DNA glycosylase MPG family.

The sequence is that of Putative 3-methyladenine DNA glycosylase from Salinibacter ruber (strain DSM 13855 / M31).